Consider the following 613-residue polypeptide: Dihydroxy-acid dehydratase (613 aa).

D81 lines the Mg(2+) pocket. C122 provides a ligand contact to [2Fe-2S] cluster. Mg(2+)-binding residues include D123 and K124. An N6-carboxylysine modification is found at K124. C193 contributes to the [2Fe-2S] cluster binding site. E489 is a Mg(2+) binding site. S515 (proton acceptor) is an active-site residue.

It belongs to the IlvD/Edd family. As to quaternary structure, homodimer. [2Fe-2S] cluster serves as cofactor. Mg(2+) is required as a cofactor.

It carries out the reaction (2R)-2,3-dihydroxy-3-methylbutanoate = 3-methyl-2-oxobutanoate + H2O. It catalyses the reaction (2R,3R)-2,3-dihydroxy-3-methylpentanoate = (S)-3-methyl-2-oxopentanoate + H2O. It functions in the pathway amino-acid biosynthesis; L-isoleucine biosynthesis; L-isoleucine from 2-oxobutanoate: step 3/4. Its pathway is amino-acid biosynthesis; L-valine biosynthesis; L-valine from pyruvate: step 3/4. In terms of biological role, functions in the biosynthesis of branched-chain amino acids. Catalyzes the dehydration of (2R,3R)-2,3-dihydroxy-3-methylpentanoate (2,3-dihydroxy-3-methylvalerate) into 2-oxo-3-methylpentanoate (2-oxo-3-methylvalerate) and of (2R)-2,3-dihydroxy-3-methylbutanoate (2,3-dihydroxyisovalerate) into 2-oxo-3-methylbutanoate (2-oxoisovalerate), the penultimate precursor to L-isoleucine and L-valine, respectively. The polypeptide is Dihydroxy-acid dehydratase (Pseudomonas fluorescens (strain ATCC BAA-477 / NRRL B-23932 / Pf-5)).